A 426-amino-acid chain; its full sequence is UDP-N-acetylglucosamine--N-acetylmuramyl-(pentapeptide) pyrophosphoryl-undecaprenol N-acetylglucosamine transferase (426 aa).

Residues 28 to 30 (TGG), asparagine 140, arginine 176, serine 204, isoleucine 257, and glutamine 302 each bind UDP-N-acetyl-alpha-D-glucosamine. The segment at 369 to 388 (AGNGPSGMGNGHSSEQPQER) is disordered.

The protein belongs to the glycosyltransferase 28 family. MurG subfamily.

It is found in the cell inner membrane. It carries out the reaction di-trans,octa-cis-undecaprenyl diphospho-N-acetyl-alpha-D-muramoyl-L-alanyl-D-glutamyl-meso-2,6-diaminopimeloyl-D-alanyl-D-alanine + UDP-N-acetyl-alpha-D-glucosamine = di-trans,octa-cis-undecaprenyl diphospho-[N-acetyl-alpha-D-glucosaminyl-(1-&gt;4)]-N-acetyl-alpha-D-muramoyl-L-alanyl-D-glutamyl-meso-2,6-diaminopimeloyl-D-alanyl-D-alanine + UDP + H(+). The protein operates within cell wall biogenesis; peptidoglycan biosynthesis. Its function is as follows. Cell wall formation. Catalyzes the transfer of a GlcNAc subunit on undecaprenyl-pyrophosphoryl-MurNAc-pentapeptide (lipid intermediate I) to form undecaprenyl-pyrophosphoryl-MurNAc-(pentapeptide)GlcNAc (lipid intermediate II). The polypeptide is UDP-N-acetylglucosamine--N-acetylmuramyl-(pentapeptide) pyrophosphoryl-undecaprenol N-acetylglucosamine transferase (Xanthomonas axonopodis pv. citri (strain 306)).